A 229-amino-acid polypeptide reads, in one-letter code: Ribonuclease 3 (229 aa).

The RNase III domain occupies 5–127 (LSRLERKLGH…LIGAIYLDAG (123 aa)). Glu-40 lines the Mg(2+) pocket. The active site involves Asp-44. Residues Asp-113 and Glu-116 each coordinate Mg(2+). Residue Glu-116 is part of the active site. The DRBM domain maps to 154-224 (DPKTRLQEFL…AAAALIALGV (71 aa)).

The protein belongs to the ribonuclease III family. As to quaternary structure, homodimer. The cofactor is Mg(2+).

The protein resides in the cytoplasm. The enzyme catalyses Endonucleolytic cleavage to 5'-phosphomonoester.. Digests double-stranded RNA. Involved in the processing of primary rRNA transcript to yield the immediate precursors to the large and small rRNAs (23S and 16S). Processes some mRNAs, and tRNAs when they are encoded in the rRNA operon. Processes pre-crRNA and tracrRNA of type II CRISPR loci if present in the organism. The chain is Ribonuclease 3 from Ectopseudomonas mendocina (strain ymp) (Pseudomonas mendocina).